A 196-amino-acid polypeptide reads, in one-letter code: Small ribosomal subunit protein uS4C (196 aa).

Positions 87–149 (CRLDNVVYRI…HRQNEMFSNN (63 aa)) constitute an S4 RNA-binding domain.

The protein belongs to the universal ribosomal protein uS4 family. As to quaternary structure, part of the 30S ribosomal subunit. Contacts protein S5. The interaction surface between S4 and S5 is involved in control of translational fidelity.

In terms of biological role, one of the primary rRNA binding proteins, it binds directly to 16S rRNA where it nucleates assembly of the body of the 30S subunit. Its function is as follows. With S5 and S12 plays an important role in translational accuracy. The chain is Small ribosomal subunit protein uS4C (rpsD3) from Clostridium acetobutylicum (strain ATCC 824 / DSM 792 / JCM 1419 / IAM 19013 / LMG 5710 / NBRC 13948 / NRRL B-527 / VKM B-1787 / 2291 / W).